Here is a 325-residue protein sequence, read N- to C-terminus: Aldo-keto reductase family 1 member A1 (325 aa).

A2 bears the N-acetylalanine mark. Position 4 is a phosphoserine (S4). NADP(+)-binding positions include 11–20, T21, and W22; that span reads GQKMPLIGLG. S38 carries the phosphoserine modification. Residue D45 coordinates NADP(+). The Proton donor role is filled by Y50. The residue at position 127 (K127) is an N6-acetyllysine; alternate. At K127 the chain carries N6-succinyllysine; alternate. The residue at position 145 (K145) is an N6-succinyllysine. 13 residues coordinate NADP(+): S162, N163, S211, L213, S215, S216, K263, S264, I265, T266, R269, Q272, and N273. Position 211 is a phosphoserine (S211).

The protein belongs to the aldo/keto reductase family.

Its subcellular location is the cytoplasm. It is found in the cytosol. The protein resides in the apical cell membrane. The catalysed reaction is a primary alcohol + NADP(+) = an aldehyde + NADPH + H(+). It catalyses the reaction L-gulonate + NADP(+) = aldehydo-D-glucuronate + NADPH + H(+). The enzyme catalyses L-gulono-1,4-lactone + NADP(+) = D-glucurono-3,6-lactone + NADPH + H(+). It carries out the reaction allyl alcohol + NADP(+) = acrolein + NADPH + H(+). The catalysed reaction is glycerol + NADP(+) = D-glyceraldehyde + NADPH + H(+). It catalyses the reaction glycerol + NADP(+) = L-glyceraldehyde + NADPH + H(+). The enzyme catalyses hydroxyacetone + NADP(+) = methylglyoxal + NADPH + H(+). It carries out the reaction 3-deoxyfructose + NADP(+) = 3-deoxyglucosone + NADPH + H(+). The catalysed reaction is (R)-mevalonate + NADP(+) = (R)-mevaldate + NADPH + H(+). It catalyses the reaction pyridine 3-methanol + NADP(+) = pyridine-3-carbaldehyde + NADPH + H(+). The enzyme catalyses S-nitroso-CoA + NADPH + H(+) = sulfinamide-CoA + NADP(+). It carries out the reaction S-nitrosoglutathione + NADPH + H(+) = S-(hydroxysulfenamide)glutathione + NADP(+). Catalyzes the NADPH-dependent reduction of a wide variety of carbonyl-containing compounds to their corresponding alcohols. Displays enzymatic activity towards endogenous metabolites such as aromatic and aliphatic aldehydes, ketones, monosaccharides and bile acids, with a preference for negatively charged substrates, such as glucuronate and succinic semialdehyde. Functions as a detoxifiying enzyme by reducing a range of toxic aldehydes. Reduces methylglyoxal and 3-deoxyglucosone, which are present at elevated levels under hyperglycemic conditions and are cytotoxic. Involved also in the detoxification of lipid-derived aldehydes like acrolein. Plays a role in the activation of procarcinogens, such as polycyclic aromatic hydrocarbon trans-dihydrodiols, and in the metabolism of various xenobiotics and drugs. Also acts as an inhibitor of protein S-nitrosylation by mediating degradation of S-nitroso-coenzyme A (S-nitroso-CoA), a cofactor required to S-nitrosylate proteins. S-nitroso-CoA reductase activity is involved in reprogramming intermediary metabolism in renal proximal tubules, notably by inhibiting protein S-nitrosylation of isoform 2 of PKM (PKM2). Also acts as a S-nitroso-glutathione reductase by catalyzing the NADPH-dependent reduction of S-nitrosoglutathione. Displays no reductase activity towards retinoids. In Pongo abelii (Sumatran orangutan), this protein is Aldo-keto reductase family 1 member A1 (AKR1A1).